The sequence spans 595 residues: Anthranilate synthase alpha subunit 1, chloroplastic (595 aa).

The N-terminal 54 residues, 1–54 (MSSSMNVATMQALTFSRRLLPSVASRYLSSSSVTVTGYSGRSSAYAPSFRSIKC), are a transit peptide targeting the chloroplast. Valine 55 carries the post-translational modification N-acetylvaline. Residues serine 115 and 356-358 (PYM) each bind L-tryptophan. 391 to 392 (GT) lines the chorismate pocket. Mg(2+) is bound at residue glutamate 418. Residues tyrosine 506, arginine 526, 558 to 560 (GAG), and glycine 560 contribute to the chorismate site. Residue glutamate 573 participates in Mg(2+) binding.

It belongs to the anthranilate synthase component I family. In terms of assembly, heterotetramer consisting of two non-identical subunits: a beta subunit and a large alpha subunit. The cofactor is Mg(2+). Expressed in the central cylinder of mature primary root zones, including pericycle and early lateral root primordia, and vasculature of cotyledons.

The protein localises to the plastid. The protein resides in the chloroplast. The enzyme catalyses chorismate + L-glutamine = anthranilate + pyruvate + L-glutamate + H(+). It participates in amino-acid biosynthesis; L-tryptophan biosynthesis; L-tryptophan from chorismate: step 1/5. Its activity is regulated as follows. Feedback inhibition by tryptophan. Its function is as follows. Part of a heterotetrameric complex that catalyzes the two-step biosynthesis of anthranilate, an intermediate in the biosynthesis of L-tryptophan. In the first step, the glutamine-binding beta subunit of anthranilate synthase (AS) provides the glutamine amidotransferase activity which generates ammonia as a substrate that, along with chorismate, is used in the second step, catalyzed by the large alpha subunit of AS to produce anthranilate. Plays an important regulatory role in auxin production via the tryptophan-dependent biosynthetic pathway. The polypeptide is Anthranilate synthase alpha subunit 1, chloroplastic (ASA1) (Arabidopsis thaliana (Mouse-ear cress)).